Reading from the N-terminus, the 78-residue chain is Small integral membrane protein 1 (78 aa).

An N-acetylmethionine modification is found at Met-1. Positions 1–18 are enriched in basic and acidic residues; the sequence is MQPQESHVHYSRWEDGSR. Residues 1–20 form a disordered region; sequence MQPQESHVHYSRWEDGSRDG. The Cytoplasmic portion of the chain corresponds to 1 to 46; that stretch reads MQPQESHVHYSRWEDGSRDGVSLGAVSSTEEASRCRRISQRLCTGK. Residues Ser-6, Ser-17, Ser-22, and Ser-27 each carry the phosphoserine modification. The chain crosses the membrane as a helical; Signal-anchor for type II membrane protein span at residues 47–67; it reads LGIAMKVLGGVALFWIIFILG. At 68–78 the chain is on the extracellular side; sequence YLTGYYVHKCK. The interval 68–78 is displays the Vel antigen; sequence YLTGYYVHKCK.

The protein belongs to the SMIM1 family. In terms of assembly, homooligomer; disulfide-linked. In terms of tissue distribution, highly expressed in the bone marrow and expressed at lower levels in non-hematopoietic tissues. Highly expressed in erythroleukemia cell lines. Up-regulated in CD34+ hematopoietic progenitors cultured toward red blood cells.

The protein localises to the cell membrane. Its function is as follows. Regulator of red blood cell formation. The protein is Small integral membrane protein 1 of Homo sapiens (Human).